The primary structure comprises 313 residues: Maintenance of mitochondrial morphology protein 1 (313 aa).

Residues M1–G12 lie on the Lumenal side of the membrane. A helical transmembrane segment spans residues L13 to F33. Residues C34–D313 lie on the Cytoplasmic side of the membrane. Residues A42 to N63 are compositionally biased toward polar residues. Residues A42–K65 form a disordered region. Residues E90–P288 enclose the SMP-LTD domain.

This sequence belongs to the MMM1 family. As to quaternary structure, homodimer. Component of the ER-mitochondria encounter structure (ERMES) or MDM complex, composed of mmm1, mdm10, mdm12 and mdm34. A mmm1 homodimer associates with one molecule of mdm12 on each side in a pairwise head-to-tail manner, and the SMP-LTD domains of mmm1 and mdm12 generate a continuous hydrophobic tunnel for phospholipid trafficking.

Its subcellular location is the endoplasmic reticulum membrane. Functionally, component of the ERMES/MDM complex, which serves as a molecular tether to connect the endoplasmic reticulum (ER) and mitochondria. Components of this complex are involved in the control of mitochondrial shape and protein biogenesis, and function in nonvesicular lipid trafficking between the ER and mitochondria. The mdm12-mmm1 subcomplex functions in the major beta-barrel assembly pathway that is responsible for biogenesis of all outer membrane beta-barrel proteins, and acts in a late step after the SAM complex. The mdm10-mdm12-mmm1 subcomplex further acts in the TOM40-specific pathway after the action of the mdm12-mmm1 complex. Essential for establishing and maintaining the structure of mitochondria and maintenance of mtDNA nucleoids. The chain is Maintenance of mitochondrial morphology protein 1 from Schizosaccharomyces pombe (strain 972 / ATCC 24843) (Fission yeast).